Consider the following 642-residue polypeptide: MAEAAPAPTSEWDSECLTSLQPLPLPTPPAANEAHLQTAAISLWTVVAAVQAIERKVEIHSRRLLHLEGRTGTAEKKLASCEKTVTELGNQLEGKWAVLGTLLQEYGLLQRRLENLENLLRNRNFWILRLPPGIKGDIPKVPVAFDDVSIYFSTPEWEKLEEWQKELYKNIMKGNYESLISMDYAINQPDVLSQIQPEGEHNTEDQAGPEESEIPTDPSEEPGISTSDILSWIKQEEEPQVGAPPESKESDVYKSTYADEELVIKAEGLARSSLCPEVPVPFSSPPAAAKDAFSDVAFKSQQSTSMTPFGRPATDLPEASEGQVTFTQLGSYPLPPPVGEQVFSCHHCGKNLSQDMLLTHQCSHATEHPLPCAQCPKHFTPQADLSSTSQDHASETPPTCPHCARTFTHPSRLTYHLRVHNSTERPFPCPDCPKRFADQARLTSHRRAHASERPFRCAQCGRSFSLKISLLLHQRGHAQERPFSCPQCGIDFNGHSALIRHQMIHTGERPYPCTDCSKSFMRKEHLLNHRRLHTGERPFSCPHCGKSFIRKHHLMKHQRIHTGERPYPCSYCGRSFRYKQTLKDHLRSGHNGGCGGDSDPSGQPPNPPGPLITGLETSGLGVNTEGLETNQWYGEGSGGGVL.

Disordered stretches follow at residues 1-24 (MAEA…QPLP) and 198-225 (EGEH…PGIS). One can recognise a KRAB domain in the interval 143–214 (VAFDDVSIYF…DQAGPEESEI (72 aa)). Residues 207-220 (AGPEESEIPTDPSE) are compositionally biased toward acidic residues. A Glycyl lysine isopeptide (Lys-Gly) (interchain with G-Cter in SUMO2) cross-link involves residue K265. The C2H2-type 1; atypical zinc-finger motif lies at 343 to 364 (FSCHHCGKNLSQDMLLTHQCSH). The segment at 370 to 392 (LPCAQCPKHFTPQADLSSTSQDH) adopts a C2H2-type 2; degenerate zinc-finger fold. C2H2-type zinc fingers lie at residues 398-420 (PTCP…LRVH), 427-449 (FPCP…RRAH), 455-477 (FRCA…QRGH), 483-505 (FSCP…QMIH), 511-533 (YPCT…RRLH), 539-561 (FSCP…QRIH), and 567-590 (YPCS…RSGH). The segment at 587–615 (RSGHNGGCGGDSDPSGQPPNPPGPLITGL) is disordered.

It belongs to the krueppel C2H2-type zinc-finger protein family.

The protein resides in the nucleus. Functions as a transcriptional activator. This Homo sapiens (Human) protein is Zinc finger protein 398 (ZNF398).